Consider the following 71-residue polypeptide: Conotoxin De13.1 (71 aa).

The first 19 residues, 1–19 (MSGMGVLLLVLLLVMPLAA), serve as a signal peptide directing secretion. The propeptide occupies 20-35 (FHQDGEGEATRRSGGL). Residues proline 40 and proline 44 each carry the 4-hydroxyproline modification. Tryptophan 51 is subject to 6'-bromotryptophan. Glutamate 52 carries the post-translational modification 4-carboxyglutamate. Residue lysine 55 is modified to 5-hydroxylysine. Proline 58 bears the 4-hydroxyproline mark. A Histidine amide modification is found at histidine 69.

This sequence belongs to the conotoxin G superfamily. In terms of processing, contains 4 disulfide bonds. As to expression, expressed by the venom duct.

It localises to the secreted. This is Conotoxin De13.1 from Conasprella delessertii (Sozon's cone).